A 300-amino-acid chain; its full sequence is Bifunctional protein FolD (300 aa).

Residues 169 to 171 (GRG), Ser-196, and Ile-237 contribute to the NADP(+) site.

Belongs to the tetrahydrofolate dehydrogenase/cyclohydrolase family. Homodimer.

It carries out the reaction (6R)-5,10-methylene-5,6,7,8-tetrahydrofolate + NADP(+) = (6R)-5,10-methenyltetrahydrofolate + NADPH. The catalysed reaction is (6R)-5,10-methenyltetrahydrofolate + H2O = (6R)-10-formyltetrahydrofolate + H(+). Its pathway is one-carbon metabolism; tetrahydrofolate interconversion. Its function is as follows. Catalyzes the oxidation of 5,10-methylenetetrahydrofolate to 5,10-methenyltetrahydrofolate and then the hydrolysis of 5,10-methenyltetrahydrofolate to 10-formyltetrahydrofolate. The protein is Bifunctional protein FolD of Clavibacter sepedonicus (Clavibacter michiganensis subsp. sepedonicus).